Here is a 105-residue protein sequence, read N- to C-terminus: Large ribosomal subunit protein bL21 (105 aa).

The protein belongs to the bacterial ribosomal protein bL21 family. As to quaternary structure, part of the 50S ribosomal subunit. Contacts protein L20.

Its function is as follows. This protein binds to 23S rRNA in the presence of protein L20. In Parabacteroides distasonis (strain ATCC 8503 / DSM 20701 / CIP 104284 / JCM 5825 / NCTC 11152), this protein is Large ribosomal subunit protein bL21.